Consider the following 232-residue polypeptide: 5'-methylthioadenosine/S-adenosylhomocysteine nucleosidase (232 aa).

Residue Glu-12 is the Proton acceptor of the active site. Residues Gly-78, Val-152, and 173-174 (ME) contribute to the substrate site. Catalysis depends on Asp-197, which acts as the Proton donor.

Belongs to the PNP/UDP phosphorylase family. MtnN subfamily. As to quaternary structure, homodimer.

It carries out the reaction S-adenosyl-L-homocysteine + H2O = S-(5-deoxy-D-ribos-5-yl)-L-homocysteine + adenine. It catalyses the reaction S-methyl-5'-thioadenosine + H2O = 5-(methylsulfanyl)-D-ribose + adenine. The enzyme catalyses 5'-deoxyadenosine + H2O = 5-deoxy-D-ribose + adenine. Its pathway is amino-acid biosynthesis; L-methionine biosynthesis via salvage pathway; S-methyl-5-thio-alpha-D-ribose 1-phosphate from S-methyl-5'-thioadenosine (hydrolase route): step 1/2. In terms of biological role, catalyzes the irreversible cleavage of the glycosidic bond in both 5'-methylthioadenosine (MTA) and S-adenosylhomocysteine (SAH/AdoHcy) to adenine and the corresponding thioribose, 5'-methylthioribose and S-ribosylhomocysteine, respectively. Also cleaves 5'-deoxyadenosine, a toxic by-product of radical S-adenosylmethionine (SAM) enzymes, into 5-deoxyribose and adenine. Thus, is required for in vivo function of the radical SAM enzymes biotin synthase and lipoic acid synthase, that are inhibited by 5'-deoxyadenosine accumulation. This Buchnera aphidicola subsp. Acyrthosiphon pisum (strain 5A) protein is 5'-methylthioadenosine/S-adenosylhomocysteine nucleosidase.